The chain runs to 81 residues: Small ribosomal subunit protein bS18 (81 aa).

This sequence belongs to the bacterial ribosomal protein bS18 family. In terms of assembly, part of the 30S ribosomal subunit. Forms a tight heterodimer with protein bS6.

Binds as a heterodimer with protein bS6 to the central domain of the 16S rRNA, where it helps stabilize the platform of the 30S subunit. This chain is Small ribosomal subunit protein bS18, found in Chloroflexus aurantiacus (strain ATCC 29366 / DSM 635 / J-10-fl).